Consider the following 65-residue polypeptide: uncharacterized protein (65 aa).

This is an uncharacterized protein from Bacillus subtilis (Bacteriophage phi-105).